The following is a 156-amino-acid chain: Ribosome maturation factor RimP (156 aa).

It belongs to the RimP family.

The protein localises to the cytoplasm. Its function is as follows. Required for maturation of 30S ribosomal subunits. The polypeptide is Ribosome maturation factor RimP (Microcystis aeruginosa (strain NIES-843 / IAM M-2473)).